The chain runs to 271 residues: Mannosyl-3-phosphoglycerate phosphatase (271 aa).

The active-site Nucleophile is D13. D13, D15, and D214 together coordinate Mg(2+).

The protein belongs to the HAD-like hydrolase superfamily. MPGP family. Mg(2+) serves as cofactor.

The protein resides in the cytoplasm. It carries out the reaction 2-O-(alpha-D-mannosyl)-3-phosphoglycerate + H2O = (2R)-2-O-(alpha-D-mannosyl)-glycerate + phosphate. This chain is Mannosyl-3-phosphoglycerate phosphatase (yedP), found in Escherichia coli O157:H7.